Consider the following 332-residue polypeptide: Malate dehydrogenase 1, cytoplasmic (332 aa).

NAD(+)-binding positions include 16–17 (QI) and aspartate 43. The residue at position 56 (methionine 56) is a Methionine sulfoxide. NAD(+) is bound at residue glycine 90. Methionine 97 carries the post-translational modification Methionine sulfoxide. Residue arginine 99 coordinates oxaloacetate. Residue glutamine 113 participates in NAD(+) binding. Residue lysine 119 forms a Glycyl lysine isopeptide (Lys-Gly) (interchain with G-Cter in ubiquitin) linkage. Asparagine 132 is an NAD(+) binding site. 4 residues coordinate oxaloacetate: asparagine 132, arginine 163, histidine 188, and serine 243. Histidine 188 acts as the Proton acceptor in catalysis.

This sequence belongs to the LDH/MDH superfamily. MDH type 2 family. As to quaternary structure, forms a homodimer. Forms a disulfide-linked homodimer upon oxidation. Interacts with 14-3-3-like proteins GRF1 GRF3 and GRF8. Interacts with TRX1, TRX2, TRX3, TRX4 and TRX5. Expressed in rosette leaves.

It localises to the cytoplasm. The enzyme catalyses (S)-malate + NAD(+) = oxaloacetate + NADH + H(+). With respect to regulation, decreased activity upon treatment with hydrogen peroxide. Its function is as follows. Catalyzes a reversible NAD-dependent dehydrogenase reaction involved in central metabolism and redox homeostasis between organellar compartments. The protein is Malate dehydrogenase 1, cytoplasmic (MDH1) of Arabidopsis thaliana (Mouse-ear cress).